We begin with the raw amino-acid sequence, 447 residues long: ATP-dependent 6-phosphofructokinase (447 aa).

ATP contacts are provided by residues glycine 88, 154 to 155, and 179 to 182; these read RG and GDGT. Aspartate 180 provides a ligand contact to Mg(2+). Substrate is bound by residues 208–210, 253–255, glutamate 315, and 368–371; these read TVD, MGR, and YIIR. Aspartate 210 serves as the catalytic Proton acceptor.

It belongs to the phosphofructokinase type A (PFKA) family. PPi-dependent PFK group II subfamily. Atypical ATP-dependent clade 'X' sub-subfamily. As to quaternary structure, homodimer. Requires Mg(2+) as cofactor.

It localises to the cytoplasm. It catalyses the reaction beta-D-fructose 6-phosphate + ATP = beta-D-fructose 1,6-bisphosphate + ADP + H(+). The protein operates within carbohydrate degradation; glycolysis; D-glyceraldehyde 3-phosphate and glycerone phosphate from D-glucose: step 3/4. Its function is as follows. Catalyzes the phosphorylation of D-fructose 6-phosphate to fructose 1,6-bisphosphate by ATP, the first committing step of glycolysis. The chain is ATP-dependent 6-phosphofructokinase from Borreliella burgdorferi (strain ATCC 35210 / DSM 4680 / CIP 102532 / B31) (Borrelia burgdorferi).